Consider the following 170-residue polypeptide: Xanthine-guanine phosphoribosyltransferase (170 aa).

5-phospho-alpha-D-ribose 1-diphosphate is bound by residues 41–42 (RG) and 98–106 (DDLTDTGKT). D99 is a Mg(2+) binding site. D102 is a binding site for guanine. D102 serves as a coordination point for xanthine. GMP is bound at residue 102-106 (DTGKT).

Belongs to the purine/pyrimidine phosphoribosyltransferase family. XGPT subfamily. In terms of assembly, homotetramer. Mg(2+) serves as cofactor.

The protein localises to the cell inner membrane. It catalyses the reaction GMP + diphosphate = guanine + 5-phospho-alpha-D-ribose 1-diphosphate. The catalysed reaction is XMP + diphosphate = xanthine + 5-phospho-alpha-D-ribose 1-diphosphate. The enzyme catalyses IMP + diphosphate = hypoxanthine + 5-phospho-alpha-D-ribose 1-diphosphate. Its pathway is purine metabolism; GMP biosynthesis via salvage pathway; GMP from guanine: step 1/1. It functions in the pathway purine metabolism; XMP biosynthesis via salvage pathway; XMP from xanthine: step 1/1. In terms of biological role, purine salvage pathway enzyme that catalyzes the transfer of the ribosyl-5-phosphate group from 5-phospho-alpha-D-ribose 1-diphosphate (PRPP) to the N9 position of the 6-oxopurines guanine and xanthine to form the corresponding ribonucleotides GMP (guanosine 5'-monophosphate) and XMP (xanthosine 5'-monophosphate), with the release of PPi. To a lesser extent, also acts on hypoxanthine. The sequence is that of Xanthine-guanine phosphoribosyltransferase from Brucella abortus (strain 2308).